The chain runs to 228 residues: uncharacterized protein (228 aa).

Residues 1–28 form the signal peptide; the sequence is MRKKRVITCVMAASLTLGSLLPAGYASA.

This is an uncharacterized protein from Bacillus subtilis (strain 168).